The sequence spans 746 residues: Iron-sulfur clusters transporter ABCB7, mitochondrial (746 aa).

The transit peptide at Met-1–Leu-19 directs the protein to the mitochondrion. Over Thr-20–Val-133 the chain is Mitochondrial matrix. The ABC transmembrane type-1 domain occupies Val-133–Gln-429. A helical transmembrane segment spans residues Ala-134 to Phe-154. Topologically, residues Lys-155–Ser-176 are mitochondrial intermembrane. The chain crosses the membrane as a helical span at residues Thr-177–Phe-199. The Mitochondrial matrix portion of the chain corresponds to Asn-200–Gly-252. Residues Ile-253–Leu-273 form a helical membrane-spanning segment. Topologically, residues Val-274–Gly-283 are mitochondrial intermembrane. The chain crosses the membrane as a helical span at residues Gly-284–Val-304. Residues Thr-305–Ser-375 lie on the Mitochondrial matrix side of the membrane. Residues Arg-308–Arg-312 and Asn-371–Gln-374 contribute to the glutathione site. The helical transmembrane segment at Ala-376–Gly-396 threads the bilayer. Residues Asn-397–Asp-402 are Mitochondrial intermembrane-facing. Residues Leu-403–Val-423 form a helical membrane-spanning segment. A glutathione-binding site is contributed by Gly-421. Residues Tyr-424–Cys-746 lie on the Mitochondrial matrix side of the membrane. Residues Ile-465–Asn-699 form the ABC transporter domain. ATP contacts are provided by residues Tyr-474 and Gly-498–Ser-505. Residues Ser-708–Lys-728 form a disordered region.

This sequence belongs to the ABC transporter superfamily. ABCB family. Heavy Metal importer (TC 3.A.1.210) subfamily. Homodimer.

Its subcellular location is the mitochondrion inner membrane. It localises to the mitochondrion. It catalyses the reaction (glutathione)4[2Fe(III)-2S] cluster(in) + ATP + H2O = (glutathione)4[2Fe(III)-2S] cluster(out) + ADP + phosphate + H(+). Exports glutathione-coordinated iron-sulfur clusters such as [2Fe-2S]-(GS)4 cluster from the mitochondria to the cytosol in an ATP-dependent manner allowing the assembly of the cytosolic iron-sulfur (Fe/S) cluster-containing proteins and participates in iron homeostasis. May play a role in iron and lipid metabolism. This Oryzias latipes (Japanese rice fish) protein is Iron-sulfur clusters transporter ABCB7, mitochondrial.